A 68-amino-acid chain; its full sequence is MGSFSIWHWLIVLAVVLLLFGRGKIPELMGDVAKGIKNFKKGMGDDEVASADKSVDGKTVDHKSDEVR.

The chain crosses the membrane as a helical span at residues 1–21; sequence MGSFSIWHWLIVLAVVLLLFG. Residues 42-68 form a disordered region; sequence GMGDDEVASADKSVDGKTVDHKSDEVR. Positions 53–68 are enriched in basic and acidic residues; that stretch reads KSVDGKTVDHKSDEVR.

Belongs to the TatA/E family. In terms of assembly, the Tat system comprises two distinct complexes: a TatABC complex, containing multiple copies of TatA, TatB and TatC subunits, and a separate TatA complex, containing only TatA subunits. Substrates initially bind to the TatABC complex, which probably triggers association of the separate TatA complex to form the active translocon.

It localises to the cell inner membrane. Part of the twin-arginine translocation (Tat) system that transports large folded proteins containing a characteristic twin-arginine motif in their signal peptide across membranes. TatA could form the protein-conducting channel of the Tat system. This chain is Sec-independent protein translocase protein TatA, found in Rhizobium meliloti (strain 1021) (Ensifer meliloti).